The following is a 106-amino-acid chain: Toxin-like structure LSTX-D4 (106 aa).

An N-terminal signal peptide occupies residues 1–20; sequence MMKVLVVVALLVTLISYSSS. Residues 21–41 constitute a propeptide that is removed on maturation; sequence EGIGDLEADELLSLMANEQTR. 4 disulfides stabilise this stretch: C45/C60, C52/C69, C59/C85, and C71/C83.

The protein belongs to the neurotoxin 19 (CSTX) family. 02 (D7) subfamily. In terms of tissue distribution, expressed by the venom gland.

The protein localises to the secreted. This Lycosa singoriensis (Wolf spider) protein is Toxin-like structure LSTX-D4.